A 269-amino-acid chain; its full sequence is MSGCRVFIGRLNPAAREKDVERFFKGYGRIRDIDLKRGFGFVEFEDPRDADDAVYELDGKELCSERVTIEHARARSRGGRGRGRYSDRFSSRRPRNDRRNAPPVRTENRLIVENLSSRVSWQDLKDFMRQAGEVTFADAHRPKLNEGVVEFASYGDLKNAIEKLSGKEINGRKIKLIEGSKRHRSRSRSRSRTRSSSRSRSRSRSRRSKSYSRSRSRSRSRSKSRSGSRSPVPEKSQKRGSSSRSKSPASVDRQRSRSRSRSRSVDSGN.

Residues 4–74 enclose the RRM 1 domain; sequence CRVFIGRLNP…ERVTIEHARA (71 aa). The disordered stretch occupies residues 73–105; sequence RARSRGGRGRGRYSDRFSSRRPRNDRRNAPPVR. The segment covering 74–83 has biased composition (basic residues); sequence ARSRGGRGRG. Ser-86 carries the post-translational modification Phosphoserine. The RRM 2 domain maps to 108 to 189; that stretch reads NRLIVENLSS…SKRHRSRSRS (82 aa). Lys-167 is modified (N6-acetyllysine). The segment at 174–269 is disordered; the sequence is IKLIEGSKRH…SRSRSVDSGN (96 aa). Residues 181-226 show a composition bias toward basic residues; sequence KRHRSRSRSRSRTRSSSRSRSRSRSRRSKSYSRSRSRSRSRSKSRS. A phosphoserine mark is found at Ser-224, Ser-226, Ser-230, Ser-247, and Ser-250. The segment covering 239-251 has biased composition (low complexity); it reads RGSSSRSKSPASV.

It belongs to the splicing factor SR family. Found in a pre-mRNA splicing complex with SRSF4/SFRS4, SRSF5/SFRS5, SNRNP70, SNRPA1, SRRM1 and SRRM2. Interacts with RBMY; the interaction inhibits SRSF5 pre-mRNA splicing. Interacts (via RS domain) with PHF5A (via N-terminus). In terms of processing, extensively phosphorylated on serine residues in the RS domain.

Its subcellular location is the nucleus. Its function is as follows. May be required for progression through G1 and entry into S phase of cell growth. May play a regulatory role in pre-mRNA splicing. Autoregulates its own expression. Plays a role in constitutive splicing and can modulate the selection of alternative splice sites. The sequence is that of Serine/arginine-rich splicing factor 5 (Srsf5) from Mus musculus (Mouse).